The primary structure comprises 290 residues: Probable adenylate kinase 2, chloroplastic (290 aa).

Over residues 1–10 (MASSMAATAT) the composition is skewed to low complexity. The disordered stretch occupies residues 1 to 37 (MASSMAATATLSPPVLSAERPTVRGGLFLPPSPATSR). A chloroplast-targeting transit peptide spans 1-61 (MASSMAATAT…ATRKPRSLPR (61 aa)). 83–88 (ASGKGT) serves as a coordination point for ATP. Positions 103–132 (SAGDLLRAEIAAGSENGKRAKEFMEKGQLV) are NMP. AMP-binding positions include R109, 130–132 (QLV), 159–162 (GYPR), and Q166. ATP is bound by residues R193, R197, and 206-207 (IY). An LID region spans residues 196-229 (GRRLDPVTGKIYHLKYSPPENEEIASRLTQRFDD). Residues R226 and R237 each coordinate AMP.

Belongs to the adenylate kinase family.

It localises to the plastid. Its subcellular location is the chloroplast. It carries out the reaction AMP + ATP = 2 ADP. Its function is as follows. Catalyzes the reversible transfer of the terminal phosphate group between ATP and AMP. Plays an important role in cellular energy homeostasis and in adenine nucleotide metabolism. The chain is Probable adenylate kinase 2, chloroplastic from Oryza sativa subsp. japonica (Rice).